A 138-amino-acid chain; its full sequence is Large ribosomal subunit protein uL16 (138 aa).

This sequence belongs to the universal ribosomal protein uL16 family. Part of the 50S ribosomal subunit.

Its function is as follows. Binds 23S rRNA and is also seen to make contacts with the A and possibly P site tRNAs. In Hyphomonas neptunium (strain ATCC 15444), this protein is Large ribosomal subunit protein uL16.